The following is a 466-amino-acid chain: 3-isopropylmalate dehydratase large subunit (466 aa).

Residues cysteine 349, cysteine 410, and cysteine 413 each contribute to the [4Fe-4S] cluster site.

The protein belongs to the aconitase/IPM isomerase family. LeuC type 1 subfamily. In terms of assembly, heterodimer of LeuC and LeuD. Requires [4Fe-4S] cluster as cofactor.

The enzyme catalyses (2R,3S)-3-isopropylmalate = (2S)-2-isopropylmalate. It participates in amino-acid biosynthesis; L-leucine biosynthesis; L-leucine from 3-methyl-2-oxobutanoate: step 2/4. Functionally, catalyzes the isomerization between 2-isopropylmalate and 3-isopropylmalate, via the formation of 2-isopropylmaleate. This is 3-isopropylmalate dehydratase large subunit from Ruthia magnifica subsp. Calyptogena magnifica.